Reading from the N-terminus, the 689-residue chain is Glycine--tRNA ligase beta subunit (689 aa).

The protein belongs to the class-II aminoacyl-tRNA synthetase family. In terms of assembly, tetramer of two alpha and two beta subunits.

The protein resides in the cytoplasm. The catalysed reaction is tRNA(Gly) + glycine + ATP = glycyl-tRNA(Gly) + AMP + diphosphate. This Mannheimia succiniciproducens (strain KCTC 0769BP / MBEL55E) protein is Glycine--tRNA ligase beta subunit.